The sequence spans 316 residues: Transaldolase (316 aa).

The active-site Schiff-base intermediate with substrate is Lys131.

This sequence belongs to the transaldolase family. Type 1 subfamily. In terms of assembly, homodimer.

The protein resides in the cytoplasm. It carries out the reaction D-sedoheptulose 7-phosphate + D-glyceraldehyde 3-phosphate = D-erythrose 4-phosphate + beta-D-fructose 6-phosphate. It participates in carbohydrate degradation; pentose phosphate pathway; D-glyceraldehyde 3-phosphate and beta-D-fructose 6-phosphate from D-ribose 5-phosphate and D-xylulose 5-phosphate (non-oxidative stage): step 2/3. Its function is as follows. Transaldolase is important for the balance of metabolites in the pentose-phosphate pathway. The sequence is that of Transaldolase from Glaesserella parasuis serovar 5 (strain SH0165) (Haemophilus parasuis).